The following is a 441-amino-acid chain: GTPase Der (441 aa).

EngA-type G domains follow at residues 2-164 (QKVA…PADE) and 173-343 (IRIS…EKWQ). Residues 8-15 (GRPNVGKS), 55-59 (DTGGL), 116-119 (NKID), 179-186 (GRPNVGKS), 226-230 (DTAGI), and 288-291 (NKWD) contribute to the GTP site. Positions 344 to 428 (SRIPTAELNR…PVRLKWKEKG (85 aa)) constitute a KH-like domain.

Belongs to the TRAFAC class TrmE-Era-EngA-EngB-Septin-like GTPase superfamily. EngA (Der) GTPase family. Associates with the 50S ribosomal subunit.

In terms of biological role, GTPase that plays an essential role in the late steps of ribosome biogenesis. This chain is GTPase Der, found in Deinococcus geothermalis (strain DSM 11300 / CIP 105573 / AG-3a).